Consider the following 313-residue polypeptide: Acetylglutamate kinase (313 aa).

Residues 84–85 (GG), arginine 106, and asparagine 210 each bind substrate.

Belongs to the acetylglutamate kinase family. ArgB subfamily.

The protein localises to the cytoplasm. It catalyses the reaction N-acetyl-L-glutamate + ATP = N-acetyl-L-glutamyl 5-phosphate + ADP. The protein operates within amino-acid biosynthesis; L-arginine biosynthesis; N(2)-acetyl-L-ornithine from L-glutamate: step 2/4. Catalyzes the ATP-dependent phosphorylation of N-acetyl-L-glutamate. This is Acetylglutamate kinase from Gluconacetobacter diazotrophicus (strain ATCC 49037 / DSM 5601 / CCUG 37298 / CIP 103539 / LMG 7603 / PAl5).